The sequence spans 377 residues: Palmitoyltransferase PFA4 (377 aa).

Residues 1-9 (MAIKLKNRW) are Cytoplasmic-facing. The helical transmembrane segment at 10–30 (LGVAIPAFLVALIGYGSHYFI) threads the bilayer. Over 31-122 (LSNFLSWNEQ…NCVGHSNFPH (92 aa)) the chain is Lumenal. A DHHC domain is found at 78-128 (NYCKKCRVYKPERAHHCKTCNQCVLAMDHHCPWTLNCVGHSNFPHFMRFLF). C108 serves as the catalytic S-palmitoyl cysteine intermediate. A helical transmembrane segment spans residues 123 to 143 (FMRFLFWVIFSTAYLLFLLIG). Residues 144–163 (RIYLLWSIRHTAFHHRSTSE) are Cytoplasmic-facing. A helical transmembrane segment spans residues 164–184 (IIFICIMTPMDAFVLLTVSSL). The Lumenal portion of the chain corresponds to 185–377 (LGRCIYNQCL…SDFGVDTELE (193 aa)).

Belongs to the DHHC palmitoyltransferase family. PFA4 subfamily.

It localises to the endoplasmic reticulum membrane. It catalyses the reaction L-cysteinyl-[protein] + hexadecanoyl-CoA = S-hexadecanoyl-L-cysteinyl-[protein] + CoA. Mediates the reversible addition of palmitate to target proteins, thereby regulating their membrane association and biological function. This Kluyveromyces lactis (strain ATCC 8585 / CBS 2359 / DSM 70799 / NBRC 1267 / NRRL Y-1140 / WM37) (Yeast) protein is Palmitoyltransferase PFA4.